The primary structure comprises 401 residues: Acetate kinase (401 aa).

Asparagine 7 provides a ligand contact to Mg(2+). Lysine 14 contributes to the ATP binding site. Arginine 90 contributes to the substrate binding site. Residue aspartate 147 is the Proton donor/acceptor of the active site. ATP is bound by residues histidine 207–glycine 211, aspartate 282–arginine 284, and glycine 331–asparagine 335. Position 385 (glutamate 385) interacts with Mg(2+).

This sequence belongs to the acetokinase family. In terms of assembly, homodimer. It depends on Mg(2+) as a cofactor. Mn(2+) is required as a cofactor.

The protein localises to the cytoplasm. It carries out the reaction acetate + ATP = acetyl phosphate + ADP. It functions in the pathway metabolic intermediate biosynthesis; acetyl-CoA biosynthesis; acetyl-CoA from acetate: step 1/2. In terms of biological role, catalyzes the formation of acetyl phosphate from acetate and ATP. Can also catalyze the reverse reaction. The chain is Acetate kinase from Clostridium acetobutylicum (strain ATCC 824 / DSM 792 / JCM 1419 / IAM 19013 / LMG 5710 / NBRC 13948 / NRRL B-527 / VKM B-1787 / 2291 / W).